We begin with the raw amino-acid sequence, 277 residues long: NH(3)-dependent NAD(+) synthetase (277 aa).

46–53 serves as a coordination point for ATP; that stretch reads GISGGQDS. Mg(2+) is bound at residue Asp-52. Position 141 (Arg-141) interacts with deamido-NAD(+). Thr-161 contributes to the ATP binding site. Residue Glu-166 coordinates Mg(2+). Residues Lys-174 and Asp-181 each coordinate deamido-NAD(+). Lys-190 and Thr-212 together coordinate ATP. 262–263 serves as a coordination point for deamido-NAD(+); the sequence is HK.

The protein belongs to the NAD synthetase family. As to quaternary structure, homodimer.

It carries out the reaction deamido-NAD(+) + NH4(+) + ATP = AMP + diphosphate + NAD(+) + H(+). Its pathway is cofactor biosynthesis; NAD(+) biosynthesis; NAD(+) from deamido-NAD(+) (ammonia route): step 1/1. Functionally, catalyzes the ATP-dependent amidation of deamido-NAD to form NAD. Uses ammonia as a nitrogen source. The polypeptide is NH(3)-dependent NAD(+) synthetase (Corynebacterium efficiens (strain DSM 44549 / YS-314 / AJ 12310 / JCM 11189 / NBRC 100395)).